The primary structure comprises 554 residues: Carboxypeptidase Y homolog A (554 aa).

An N-terminal signal peptide occupies residues 1–17 (MRVAASTVLLGVASAAS). The propeptide occupies 18–137 (FQQQTQHVLS…KLADFNLRVK (120 aa)). 5 cysteine pairs are disulfide-bonded: Cys191–Cys431, Cys325–Cys339, Cys349–Cys372, Cys356–Cys365, and Cys394–Cys401. Asn222 carries N-linked (GlcNAc...) asparagine glycosylation. Ser278 is a catalytic residue. Asp470 is a catalytic residue. Asn518 carries N-linked (GlcNAc...) asparagine glycosylation. The active site involves His529.

The protein belongs to the peptidase S10 family.

It localises to the vacuole. The enzyme catalyses Release of a C-terminal amino acid with broad specificity.. Its function is as follows. Vacuolar carboxypeptidase involved in degradation of small peptides. Digests preferentially peptides containing an aliphatic or hydrophobic residue in P1' position, as well as methionine, leucine or phenylalanine in P1 position of ester substrate. The chain is Carboxypeptidase Y homolog A (CPYA) from Podospora anserina (strain S / ATCC MYA-4624 / DSM 980 / FGSC 10383) (Pleurage anserina).